A 213-amino-acid chain; its full sequence is Thiamine-phosphate synthase (213 aa).

4-amino-2-methyl-5-(diphosphooxymethyl)pyrimidine contacts are provided by residues 39–43 (QLREK) and N71. Mg(2+) is bound by residues D72 and D91. S110 provides a ligand contact to 4-amino-2-methyl-5-(diphosphooxymethyl)pyrimidine. 136–138 (TGT) serves as a coordination point for 2-[(2R,5Z)-2-carboxy-4-methylthiazol-5(2H)-ylidene]ethyl phosphate. K139 is a 4-amino-2-methyl-5-(diphosphooxymethyl)pyrimidine binding site. 2-[(2R,5Z)-2-carboxy-4-methylthiazol-5(2H)-ylidene]ethyl phosphate contacts are provided by residues G166 and 186 to 187 (VS).

Belongs to the thiamine-phosphate synthase family. Requires Mg(2+) as cofactor.

The enzyme catalyses 2-[(2R,5Z)-2-carboxy-4-methylthiazol-5(2H)-ylidene]ethyl phosphate + 4-amino-2-methyl-5-(diphosphooxymethyl)pyrimidine + 2 H(+) = thiamine phosphate + CO2 + diphosphate. The catalysed reaction is 2-(2-carboxy-4-methylthiazol-5-yl)ethyl phosphate + 4-amino-2-methyl-5-(diphosphooxymethyl)pyrimidine + 2 H(+) = thiamine phosphate + CO2 + diphosphate. It catalyses the reaction 4-methyl-5-(2-phosphooxyethyl)-thiazole + 4-amino-2-methyl-5-(diphosphooxymethyl)pyrimidine + H(+) = thiamine phosphate + diphosphate. It participates in cofactor biosynthesis; thiamine diphosphate biosynthesis; thiamine phosphate from 4-amino-2-methyl-5-diphosphomethylpyrimidine and 4-methyl-5-(2-phosphoethyl)-thiazole: step 1/1. In terms of biological role, condenses 4-methyl-5-(beta-hydroxyethyl)thiazole monophosphate (THZ-P) and 2-methyl-4-amino-5-hydroxymethyl pyrimidine pyrophosphate (HMP-PP) to form thiamine monophosphate (TMP). The protein is Thiamine-phosphate synthase of Clostridium botulinum (strain Eklund 17B / Type B).